The sequence spans 211 residues: Probable GTP-binding protein EngB (211 aa).

In terms of domain architecture, EngB-type G spans 13-188 (SGYEIAFAGR…ASVMAGRLHF (176 aa)). GTP-binding positions include 21-28 (GRSNAGKS), 48-52 (GRTQM), 67-70 (DLPG), 134-137 (TKAD), and 167-169 (FSS). Mg(2+) contacts are provided by S28 and T50.

This sequence belongs to the TRAFAC class TrmE-Era-EngA-EngB-Septin-like GTPase superfamily. EngB GTPase family. The cofactor is Mg(2+).

Necessary for normal cell division and for the maintenance of normal septation. The chain is Probable GTP-binding protein EngB from Acinetobacter baumannii (strain ATCC 17978 / DSM 105126 / CIP 53.77 / LMG 1025 / NCDC KC755 / 5377).